Reading from the N-terminus, the 413-residue chain is Transcription factor E2F4 (413 aa).

A disordered region spans residues 1–20; that stretch reads MAEAGPQAPPPPGTPSRHEK. N-acetylalanine is present on alanine 2. The DNA-binding element occupies 16–85; that stretch reads SRHEKSLGLL…KNSIQWKGVG (70 aa). Positions 43–65 are leucine-zipper; that stretch reads LKLAADTLAVRQKRRIYDITNVL. The short motif at 48–85 is the DEF box element; it reads DTLAVRQKRRIYDITNVLEGIGLIEKKSKNSIQWKGVG. A dimerization region spans residues 86 to 181; sequence PGCNTREIAD…GLNGQKKYQI (96 aa). Residues 211 to 340 form a disordered region; it reads PPEDLLQSPS…PSTSFEPIKA (130 aa). Polar residues-rich tracts occupy residues 234–249 and 293–306; these read AQSQ…QLTP and TLDT…ALLD. Low complexity predominate over residues 307–327; that stretch reads SSSSSSSSSSSSSNSNSSSSS. A transactivation region spans residues 337–413; that stretch reads PIKADPTGVL…DLFDVPVLNL (77 aa). Serine 384 carries the phosphoserine modification. The short motif at 389-392 is the HCFC1-binding-motif (HBM) element; that stretch reads DHDY. The tract at residues 390–407 is interaction with RBL1 and RBL2; the sequence is HDYIYNLDESEGVCDLFD.

It belongs to the E2F/DP family. As to quaternary structure, component of the DRTF1/E2F transcription factor complex. Binds cooperatively with TFDP1/Dp-1 to E2F sites. The E2F4/TFDP1 dimer interacts preferentially with pocket protein RBL1, which inhibits the E2F transactivation domain. Lower affinity interaction has been found with retinoblastoma protein RB1. Interacts with TRRAP, which probably mediates its interaction with histone acetyltransferase complexes, leading to transcription activation. Interacts with HCFC1. Component of the DREAM complex (also named LINC complex) at least composed of E2F4, E2F5, LIN9, LIN37, LIN52, LIN54, MYBL1, MYBL2, RBL1, RBL2, RBBP4, TFDP1 and TFDP2. The complex exists in quiescent cells where it represses cell cycle-dependent genes. It dissociates in S phase when LIN9, LIN37, LIN52 and LIN54 form a subcomplex that binds to MYBL2. Interacts with PML (isoform PML-1, isoform PML-2, isoform PML-3, isoform PML-4 and isoform PML-5). Interacts with CEBPA (when phosphorylated). Post-translationally, differentially phosphorylated in vivo. Found in all tissue examined including heart, brain, placenta, lung, liver, skeletal muscle, kidney and pancreas.

It localises to the nucleus. Its function is as follows. Transcription activator that binds DNA cooperatively with DP proteins through the E2 recognition site, 5'-TTTC[CG]CGC-3' found in the promoter region of a number of genes whose products are involved in cell cycle regulation or in DNA replication. The DRTF1/E2F complex functions in the control of cell-cycle progression from G1 to S phase. E2F4 binds with high affinity to RBL1 and RBL2. In some instances can also bind RB1. Specifically required for multiciliate cell differentiation: together with MCIDAS and E2F5, binds and activate genes required for centriole biogenesis. This is Transcription factor E2F4 (E2F4) from Homo sapiens (Human).